The sequence spans 508 residues: Probable ligand-gated ion channel 46 (508 aa).

A signal peptide spans Met-1 to Ala-18. The Extracellular segment spans residues Arg-19–Tyr-274. Residues Asn-65, Asn-134, Asn-175, and Asn-201 are each glycosylated (N-linked (GlcNAc...) asparagine). Cys-190 and Cys-204 are disulfide-bonded. Residues Ile-275–Leu-295 traverse the membrane as a helical segment. Residues Gly-296–Pro-301 lie on the Cytoplasmic side of the membrane. A helical membrane pass occupies residues Ala-302–Ile-321. Topologically, residues Ile-322–Asp-335 are extracellular. Residues Val-336–Gly-356 form a helical membrane-spanning segment. Residues Tyr-357 to Lys-480 lie on the Cytoplasmic side of the membrane. The interval Ala-374–Glu-407 is disordered. A helical transmembrane segment spans residues Ile-481–Trp-501. The Extracellular segment spans residues Gln-502–Tyr-508.

It belongs to the ligand-gated ion channel (TC 1.A.9) family. As to expression, expressed in the nervous system, with high expression in cholinergic motor neurons and weak expression in GABAergic motor neurons.

The protein localises to the presynaptic cell membrane. The protein resides in the cell projection. Its subcellular location is the axon. It localises to the cytoplasmic vesicle. It is found in the secretory vesicle. The protein localises to the synaptic vesicle. Functionally, probable component of a ligand-gated anion channel. Negatively regulates synaptic transmission and synaptic vesicle release in response to acetylcholine in cholinergic motor neurons. Role in synaptic vesicle release kinetics may be in association with the ligand-gated ion channel protein acc-4. The sequence is that of Probable ligand-gated ion channel 46 from Caenorhabditis elegans.